Here is a 128-residue protein sequence, read N- to C-terminus: DNA polymerase epsilon subunit 3 (128 aa).

Over residues 98–110 the composition is skewed to basic and acidic residues; the sequence is EKKESKASKKDSN. A disordered region spans residues 98-128; sequence EKKESKASKKDSNTAENANASATATAEEAPE. Residues 111–128 are compositionally biased toward low complexity; the sequence is TAENANASATATAEEAPE.

As to quaternary structure, homodimer. Component of the DNA polymerase epsilon complex consisting of four subunits: the catalytic subunit PolE1/DNApol-epsilon255 and the accessory subunits PolE2/DNApol-epsilon58, Chrac-14/DNApolE3 and PolE4. Component of the chromatin accessibility complex (CHRAC), composed of Chrac-14, Chrac-16, Acf and Iswi. Forms an heterodimer with Chrac-16. The Chrac-14/Chrac-16 heterodimer interacts with Acf (via N-terminus). Interacts directly with Iswi and this interaction is further stabilized by association with Chrac-16. Component of the Ada2a-containing (ATAC) complex composed of at least Ada2a, Atac1, Hcf, Ada3, Gcn5, Mocs2B, Charac-14, Atac3, Atac2, NC2beta and wds. Interacts with cid.

It is found in the nucleus. Its function is as follows. Accessory component of the DNA polymerase epsilon complex. Participates in DNA repair and in chromosomal DNA replication. Histone-like protein which promotes nucleosome sliding of ATP-dependent nucleosome remodeling complexes. Part of the chromatin-accessibility complex (CHRAC) which uses energy/ATP to increase the general accessibility of DNA in chromatin. As a heterodimer with Chrac-16, binds DNA and facilitates nucleosome sliding by Acf. Has a role in DNA damage response by preventing cid mislocalization to chromatin. The polypeptide is DNA polymerase epsilon subunit 3 (Drosophila melanogaster (Fruit fly)).